Consider the following 287-residue polypeptide: 4-diphosphocytidyl-2-C-methyl-D-erythritol kinase (287 aa).

Residue K11 is part of the active site. 93-103 (PFGAGLGGGSS) is an ATP binding site. The active site involves D135.

This sequence belongs to the GHMP kinase family. IspE subfamily.

It catalyses the reaction 4-CDP-2-C-methyl-D-erythritol + ATP = 4-CDP-2-C-methyl-D-erythritol 2-phosphate + ADP + H(+). It functions in the pathway isoprenoid biosynthesis; isopentenyl diphosphate biosynthesis via DXP pathway; isopentenyl diphosphate from 1-deoxy-D-xylulose 5-phosphate: step 3/6. Functionally, catalyzes the phosphorylation of the position 2 hydroxy group of 4-diphosphocytidyl-2C-methyl-D-erythritol. This chain is 4-diphosphocytidyl-2-C-methyl-D-erythritol kinase, found in Pelodictyon phaeoclathratiforme (strain DSM 5477 / BU-1).